Reading from the N-terminus, the 510-residue chain is ETS translocation variant 5 (510 aa).

A disordered region spans residues 131-208 (FKPLTPPTTP…QPLQMPKMMP (78 aa)). Residues 161–174 (GHAPAAGPVQGVGP) show a composition bias toward low complexity. Residues 175-185 (APAPHSLPEPG) are compositionally biased toward pro residues. S248 is subject to Phosphoserine. K350 is covalently cross-linked (Glycyl lysine isopeptide (Lys-Gly) (interchain with G-Cter in SUMO2)). A DNA-binding region (ETS) is located at residues 368–448 (LQLWQFLVTL…AGERYVYKFV (81 aa)).

As to quaternary structure, interacts (via C-terminal) with ZMYM5 (via N-terminal 120 amino acid region). In terms of tissue distribution, ubiquitous.

The protein localises to the nucleus. Its function is as follows. Binds to DNA sequences containing the consensus nucleotide core sequence 5'-GGAA.-3'. The sequence is that of ETS translocation variant 5 (ETV5) from Homo sapiens (Human).